The chain runs to 333 residues: 4-hydroxy-3-methylbut-2-enyl diphosphate reductase (333 aa).

Cys34 serves as a coordination point for [4Fe-4S] cluster. (2E)-4-hydroxy-3-methylbut-2-enyl diphosphate contacts are provided by His63 and His96. The dimethylallyl diphosphate site is built by His63 and His96. Residues His63 and His96 each coordinate isopentenyl diphosphate. [4Fe-4S] cluster is bound at residue Cys118. His146 contributes to the (2E)-4-hydroxy-3-methylbut-2-enyl diphosphate binding site. His146 provides a ligand contact to dimethylallyl diphosphate. Residue His146 coordinates isopentenyl diphosphate. The active-site Proton donor is Glu148. Residue Thr186 coordinates (2E)-4-hydroxy-3-methylbut-2-enyl diphosphate. Cys216 lines the [4Fe-4S] cluster pocket. Residues Ser244, Ser245, Asn246, and Ser289 each coordinate (2E)-4-hydroxy-3-methylbut-2-enyl diphosphate. The dimethylallyl diphosphate site is built by Ser244, Ser245, Asn246, and Ser289. Residues Ser244, Ser245, Asn246, and Ser289 each coordinate isopentenyl diphosphate.

Belongs to the IspH family. [4Fe-4S] cluster is required as a cofactor.

The enzyme catalyses isopentenyl diphosphate + 2 oxidized [2Fe-2S]-[ferredoxin] + H2O = (2E)-4-hydroxy-3-methylbut-2-enyl diphosphate + 2 reduced [2Fe-2S]-[ferredoxin] + 2 H(+). It carries out the reaction dimethylallyl diphosphate + 2 oxidized [2Fe-2S]-[ferredoxin] + H2O = (2E)-4-hydroxy-3-methylbut-2-enyl diphosphate + 2 reduced [2Fe-2S]-[ferredoxin] + 2 H(+). The protein operates within isoprenoid biosynthesis; dimethylallyl diphosphate biosynthesis; dimethylallyl diphosphate from (2E)-4-hydroxy-3-methylbutenyl diphosphate: step 1/1. It participates in isoprenoid biosynthesis; isopentenyl diphosphate biosynthesis via DXP pathway; isopentenyl diphosphate from 1-deoxy-D-xylulose 5-phosphate: step 6/6. Functionally, catalyzes the conversion of 1-hydroxy-2-methyl-2-(E)-butenyl 4-diphosphate (HMBPP) into a mixture of isopentenyl diphosphate (IPP) and dimethylallyl diphosphate (DMAPP). Acts in the terminal step of the DOXP/MEP pathway for isoprenoid precursor biosynthesis. The chain is 4-hydroxy-3-methylbut-2-enyl diphosphate reductase from Mycobacterium sp. (strain KMS).